The primary structure comprises 341 residues: HTH-type transcriptional repressor PurR (341 aa).

An HTH lacI-type domain is found at 2-56 (ATIKDVAKRANVSTTTVSHVINKTRFVAEETRNAVWAAIKELHYSPSAVARSLKV). Positions 4 to 23 (IKDVAKRANVSTTTVSHVIN) form a DNA-binding region, H-T-H motif. A DNA-binding region spans residues 48–56 (SAVARSLKV). Hypoxanthine-binding residues include Y73, R190, T192, F221, and D275.

As to quaternary structure, homodimer.

The protein operates within purine metabolism; purine nucleotide biosynthesis [regulation]. Its function is as follows. Is the main repressor of the genes involved in the de novo synthesis of purine nucleotides, regulating purB, purC, purEK, purF, purHD, purL, purMN and guaBA expression. PurR is allosterically activated to bind its cognate DNA by binding the purine corepressors, hypoxanthine or guanine, thereby effecting transcription repression. The sequence is that of HTH-type transcriptional repressor PurR from Klebsiella pneumoniae (strain 342).